We begin with the raw amino-acid sequence, 198 residues long: MKMKLFGRWDYEDVTVEDPGLRDYINLKPMLIPYSGGRHQKHRFGKAKIPIIERLAGRLMTSGHLGKKHKWTSEHQTGKKYNAYKIIIRTFEIIEKRTKQNPLKVFVKAIENAAPREETTTIEYGGARYPKAVDCSPQRRVDLAIRHMVWGAFHGSRKKPISIEEALAEEIINAYNNSLKSYAIKRKLEIEKTAESAR.

Belongs to the universal ribosomal protein uS7 family. Part of the 30S ribosomal subunit.

One of the primary rRNA binding proteins, it binds directly to 16S rRNA where it nucleates assembly of the head domain of the 30S subunit. Is located at the subunit interface close to the decoding center. The polypeptide is Small ribosomal subunit protein uS7 (Nanoarchaeum equitans (strain Kin4-M)).